A 171-amino-acid polypeptide reads, in one-letter code: Crossover junction endodeoxyribonuclease RuvC (171 aa).

Active-site residues include Asp-12, Glu-72, and Asp-144. 3 residues coordinate Mg(2+): Asp-12, Glu-72, and Asp-144.

Belongs to the RuvC family. As to quaternary structure, homodimer which binds Holliday junction (HJ) DNA. The HJ becomes 2-fold symmetrical on binding to RuvC with unstacked arms; it has a different conformation from HJ DNA in complex with RuvA. In the full resolvosome a probable DNA-RuvA(4)-RuvB(12)-RuvC(2) complex forms which resolves the HJ. Mg(2+) is required as a cofactor.

It localises to the cytoplasm. It carries out the reaction Endonucleolytic cleavage at a junction such as a reciprocal single-stranded crossover between two homologous DNA duplexes (Holliday junction).. Its function is as follows. The RuvA-RuvB-RuvC complex processes Holliday junction (HJ) DNA during genetic recombination and DNA repair. Endonuclease that resolves HJ intermediates. Cleaves cruciform DNA by making single-stranded nicks across the HJ at symmetrical positions within the homologous arms, yielding a 5'-phosphate and a 3'-hydroxyl group; requires a central core of homology in the junction. The consensus cleavage sequence is 5'-(A/T)TT(C/G)-3'. Cleavage occurs on the 3'-side of the TT dinucleotide at the point of strand exchange. HJ branch migration catalyzed by RuvA-RuvB allows RuvC to scan DNA until it finds its consensus sequence, where it cleaves and resolves the cruciform DNA. In Afipia carboxidovorans (strain ATCC 49405 / DSM 1227 / KCTC 32145 / OM5) (Oligotropha carboxidovorans), this protein is Crossover junction endodeoxyribonuclease RuvC.